The sequence spans 325 residues: Natural cytotoxicity triggering receptor 1 (325 aa).

Positions 1–16 (MLPTLTALLCLGLCLS) are cleaved as a signal peptide. Residues 17-258 (QRINTEKQTL…WDHTAQNLIR (242 aa)) lie on the Extracellular side of the membrane. 2 consecutive Ig-like domains span residues 42 to 100 (GNSV…TCFY) and 137 to 192 (GENV…RCFG). C49 and C98 form a disulfide bridge. N139 carries an N-linked (GlcNAc...) asparagine glycan. An intrachain disulfide couples C144 to C190. N216 carries an N-linked (GlcNAc...) asparagine glycan. A helical membrane pass occupies residues 259–279 (IGLACIIVMALVWLLAEDWLS). The Cytoplasmic segment spans residues 280-325 (RRKDHEKLNRLTSWECRGRRRMHRYHEEEQRDAISMRELKATPGDM).

Belongs to the natural cytotoxicity receptor (NCR) family. As to quaternary structure, interacts with CD3Z and FCER1G. Weakly expressed in spleen, heart and lung.

The protein resides in the cell membrane. Cytotoxicity-activating receptor that may contribute to the increased efficiency of activated natural killer (NK) cells to mediate tumor cell lysis. This chain is Natural cytotoxicity triggering receptor 1 (Ncr1), found in Rattus norvegicus (Rat).